Reading from the N-terminus, the 494-residue chain is Probable cytosol aminopeptidase (494 aa).

2 residues coordinate Mn(2+): lysine 264 and aspartate 269. Lysine 276 is an active-site residue. Positions 287, 346, and 348 each coordinate Mn(2+). Arginine 350 is an active-site residue.

This sequence belongs to the peptidase M17 family. It depends on Mn(2+) as a cofactor.

The protein resides in the cytoplasm. It catalyses the reaction Release of an N-terminal amino acid, Xaa-|-Yaa-, in which Xaa is preferably Leu, but may be other amino acids including Pro although not Arg or Lys, and Yaa may be Pro. Amino acid amides and methyl esters are also readily hydrolyzed, but rates on arylamides are exceedingly low.. The enzyme catalyses Release of an N-terminal amino acid, preferentially leucine, but not glutamic or aspartic acids.. Functionally, presumably involved in the processing and regular turnover of intracellular proteins. Catalyzes the removal of unsubstituted N-terminal amino acids from various peptides. The protein is Probable cytosol aminopeptidase (pepA) of Pasteurella multocida (strain Pm70).